Reading from the N-terminus, the 1324-residue chain is Coiled-coil domain-containing protein 171 (1324 aa).

5 coiled-coil regions span residues 29 to 296 (KNET…RAAH), 325 to 393 (AEAV…RLQY), 453 to 521 (FSVV…KCAD), 599 to 712 (SELC…VREN), and 981 to 1145 (FTQR…KECV). Residues 1301–1312 (PHSLSSQSSPGV) show a composition bias toward polar residues. A disordered region spans residues 1301 to 1324 (PHSLSSQSSPGVPTNAKRPSQIGL).

The polypeptide is Coiled-coil domain-containing protein 171 (Ccdc171) (Mus musculus (Mouse)).